We begin with the raw amino-acid sequence, 162 residues long: Disulfide bond formation protein B (162 aa).

The Cytoplasmic segment spans residues M1–A8. The chain crosses the membrane as a helical span at residues V9–A25. The Periplasmic portion of the chain corresponds to A26–L43. C35 and C38 are joined by a disulfide. A helical membrane pass occupies residues C44 to P60. The Cytoplasmic segment spans residues R61 to L67. A helical membrane pass occupies residues F68–A85. Residues Y86–V141 lie on the Periplasmic side of the membrane. C101 and C128 are joined by a disulfide. The helical transmembrane segment at W142–R160 threads the bilayer. Topologically, residues A161 to K162 are cytoplasmic.

It belongs to the DsbB family.

The protein resides in the cell inner membrane. Functionally, required for disulfide bond formation in some periplasmic proteins. Acts by oxidizing the DsbA protein. The sequence is that of Disulfide bond formation protein B from Neisseria meningitidis serogroup B (strain ATCC BAA-335 / MC58).